Reading from the N-terminus, the 154-residue chain is Ribosomal RNA large subunit methyltransferase H (154 aa).

S-adenosyl-L-methionine is bound by residues L76, G103, and 122–127 (LSPLTL).

This sequence belongs to the RNA methyltransferase RlmH family. In terms of assembly, homodimer.

It is found in the cytoplasm. The enzyme catalyses pseudouridine(1915) in 23S rRNA + S-adenosyl-L-methionine = N(3)-methylpseudouridine(1915) in 23S rRNA + S-adenosyl-L-homocysteine + H(+). Functionally, specifically methylates the pseudouridine at position 1915 (m3Psi1915) in 23S rRNA. The polypeptide is Ribosomal RNA large subunit methyltransferase H (Wolinella succinogenes (strain ATCC 29543 / DSM 1740 / CCUG 13145 / JCM 31913 / LMG 7466 / NCTC 11488 / FDC 602W) (Vibrio succinogenes)).